We begin with the raw amino-acid sequence, 490 residues long: 5'-3' exonuclease PLD3 (490 aa).

At 1–38 (MKPKLMYQELKVPAEEPASELPMNEIEAWKAAEKKARW) the chain is on the cytoplasmic side. Residues 39-59 (VLLVLILAVVGFGALMTQLFL) traverse the membrane as a helical; Signal-anchor for type II membrane protein segment. Residues 60-490 (WEYGDLHLFG…DSVGNACRLL (431 aa)) lie on the Lumenal side of the membrane. Intrachain disulfides connect Cys-77-Cys-239 and Cys-81-Cys-237. N-linked (GlcNAc...) asparagine glycans are attached at residues Asn-97 and Asn-132. In terms of domain architecture, PLD phosphodiesterase 1 spans 196-223 (THGVLHTKFWVVDQTHFYLGSANMDWRS). Active-site residues include His-201, Lys-203, and Asp-208. His-201 functions as the Proton donor in the catalytic mechanism. Phosphate-binding residues include His-201 and Lys-203. Asn-218 lines the phosphate pocket. N-linked (GlcNAc...) asparagine glycosylation is found at Asn-236, Asn-284, and Asn-387. The cysteines at positions 366 and 487 are disulfide-linked. The PLD phosphodiesterase 2 domain maps to 411-437 (YARVNHNKYMVTERATYIGTSNWSGSY). Residue His-416 coordinates phosphate. The active-site Nucleophile is the His-416. Phe-438 is a Mg(2+) binding site.

It belongs to the phospholipase D family. Homodimer. Interacts with APP. Post-translationally, N-glycosylated. Proteolytically processed to a soluble form that is stable within endosomes and lysosomes. During transport through the secretory pathway becomes proteolysed by cysteine proteases, thereby releasing a stable soluble lysosomal lumenal polypeptide, whereas the transmembrane-bound fragment is rapidly degraded. Its transport route to lysosomes involves ubiquitination and the ESCRT complex. In terms of processing, ubiquitinated. Ubiquitination mediates sorting into lysosomes.

The protein localises to the endoplasmic reticulum membrane. It localises to the lysosome lumen. It is found in the early endosome membrane. The protein resides in the late endosome membrane. Its subcellular location is the golgi apparatus membrane. The protein localises to the endosome membrane. It carries out the reaction Exonucleolytic cleavage in the 5'- to 3'-direction to yield nucleoside 3'-phosphates.. The enzyme catalyses a 5'-end 5'-dephospho-ribonucleotidyl-ribonucleotide-RNA + H2O = a ribonucleoside 3'-phosphate + a 5'-end dephospho-ribonucleoside-RNA + H(+). It catalyses the reaction a ribonucleoside 3'-phosphate-2'-3'-cyclophospho-GMP + H2O = a ribonucleoside 3'-phosphate + 2',3'-cyclophospho-GMP + H(+). The catalysed reaction is a 5'-end 5'-dephospho-2'-deoxyribonucleotidyl-2'-deoxyribonucleotide in single-stranded DNA + H2O = a 5'-end dephospho-2'-deoxyribonucleoside in single-stranded DNA + a 2'-deoxyribonucleoside 3'-phosphate + H(+). It carries out the reaction a 5'-end 5'-phospho-2'-deoxyribonucleotide in single-stranded DNA + H2O = a 5'-end 5'-dephospho-2'-deoxyribonucleotide in single-stranded DNA + phosphate. The enzyme catalyses a 3-lyso-sn-glycero-1-phospho-(3'-acyl-1'-sn-glycerol) + a 1-acyl-sn-glycerol = a 3-acyl-sn-glycero-1-phospho-(3'-acyl-1'-sn-glycerol) + glycerol. It catalyses the reaction 3-lyso-sn-glycero-1-phospho-(3'-(9Z-octadecenoyl)-1'-sn-glycerol) + 1-(9Z-octadecenoyl)-sn-glycerol = 3-(9Z-octadecenoyl)-sn-glycero-1-phospho-(3'-(9Z-octadecenoyl)-1'-sn-glycerol) + glycerol. 5'-&gt;3' exonuclease that hydrolyzes the phosphodiester bond of single-stranded DNA (ssDNA) and RNA molecules to form nucleoside 3'-monophosphates and 5'-end 5'-hydroxy deoxyribonucleotide/ribonucleotide fragments. Partially redundant with PLD4, can cleave all four nucleotides displaying higher efficiency for ssDNA and RNA fragments initiated with uridine and guanosine residues and lower efficiency for cytidine-initiated substrates. As a result, it does not always degrade polynucleotides to the single nucleotide level, it can stall at specific sites sparing certain fragments from exonucleolytic degradation. Processes self and pathogenic ssDNA and RNA molecules that reach the endolysosomal compartment via phagocytosis or autophagy and may serve as 'danger' signals for recognition by innate immune receptors such as toll-like receptors (TLRs). Degrades mitochondrial CpG-rich ssDNA fragments to prevent TLR9 activation and autoinflammatory response, but it can cleave viral RNA to generate ligands for TLR7 activation and initiate antiviral immune responses. In plasmacytoid dendritic cells, it cooperates with endonuclease RNASET2 to release 2',3'-cyclic guanosine monophosphate (2',3'-cGMP), a potent stimulatory ligand for TLR7. Produces 2',3'-cGMPs and cytidine-rich RNA fragments that occupy TLR7 ligand-binding pockets and trigger a signaling-competent state. Can exert polynucleotide phosphatase activity toward 5'-phosphorylated ssDNA substrates although at a slow rate. Transphosphatidylase that catalyzes the exchange with R to S stereo-inversion of the glycerol moiety between (S,R)-lysophosphatidylglycerol (LPG) and monoacylglycerol (MAG) substrates to yield (S,S)-bis(monoacylglycero)phosphate (BMP). Can synthesize a variety of (S,S)-BMPs representing the main phospholipid constituent of lysosomal intralumenal vesicle (ILV) membranes that bind acid hydrolases for lipid degradation. Regulates the homeostasis and interorganellar communication of the endolysosomal system with an overall impact on cellular removal of dysfunctional organelles via autophagy as well as proper protein and lipid turnover. May play a role in myotube formation in response to ER stress. This chain is 5'-3' exonuclease PLD3 (PLD3), found in Bos taurus (Bovine).